The following is a 429-amino-acid chain: UDP-N-acetylglucosamine 1-carboxyvinyltransferase (429 aa).

22–23 (KN) contributes to the phosphoenolpyruvate binding site. Arg102 lines the UDP-N-acetyl-alpha-D-glucosamine pocket. The Proton donor role is filled by Cys126. Position 126 is a 2-(S-cysteinyl)pyruvic acid O-phosphothioketal (Cys126). UDP-N-acetyl-alpha-D-glucosamine contacts are provided by residues 131-135 (RPVDL), Asp316, and Ile338.

It belongs to the EPSP synthase family. MurA subfamily.

Its subcellular location is the cytoplasm. It catalyses the reaction phosphoenolpyruvate + UDP-N-acetyl-alpha-D-glucosamine = UDP-N-acetyl-3-O-(1-carboxyvinyl)-alpha-D-glucosamine + phosphate. Its pathway is cell wall biogenesis; peptidoglycan biosynthesis. Its function is as follows. Cell wall formation. Adds enolpyruvyl to UDP-N-acetylglucosamine. The protein is UDP-N-acetylglucosamine 1-carboxyvinyltransferase of Rhodopseudomonas palustris (strain BisB18).